The chain runs to 415 residues: Erythronolide mycarosyltransferase (415 aa).

The protein belongs to the glycosyltransferase 28 family.

It catalyses the reaction dTDP-beta-L-mycarose + erythronolide B = 3-O-alpha-L-mycarosylerythronolide B + dTDP + H(+). Involved in the biosynthesis of the macrolide antibiotic erythromycin. Catalyzes the reversible transfer of mycarosyl from dTDP-beta-L-mycarose to erythronolide B to yield 3-alpha-L-mycarosylerythronolide B. It can also use TDP-beta-L-cladinose. In Saccharopolyspora erythraea (Streptomyces erythraeus), this protein is Erythronolide mycarosyltransferase.